Reading from the N-terminus, the 517-residue chain is Maturase K (517 aa).

The protein belongs to the intron maturase 2 family. MatK subfamily.

It localises to the plastid. Its subcellular location is the chloroplast. Its function is as follows. Usually encoded in the trnK tRNA gene intron. Probably assists in splicing its own and other chloroplast group II introns. The protein is Maturase K of Trillium maculatum (Spotted wakerobin).